A 112-amino-acid chain; its full sequence is UPF0342 protein SPT_0901 (112 aa).

Belongs to the UPF0342 family.

This is UPF0342 protein SPT_0901 from Streptococcus pneumoniae (strain Taiwan19F-14).